The chain runs to 356 residues: DNA polymerase IV (356 aa).

Residues 7 to 188 (IIHIDMDAFY…IPVTKFYGVG (182 aa)) form the UmuC domain. Residues aspartate 11 and aspartate 106 each coordinate Mg(2+). Glutamate 107 is an active-site residue.

It belongs to the DNA polymerase type-Y family. As to quaternary structure, monomer. It depends on Mg(2+) as a cofactor.

Its subcellular location is the cytoplasm. It carries out the reaction DNA(n) + a 2'-deoxyribonucleoside 5'-triphosphate = DNA(n+1) + diphosphate. Its function is as follows. Poorly processive, error-prone DNA polymerase involved in untargeted mutagenesis. Copies undamaged DNA at stalled replication forks, which arise in vivo from mismatched or misaligned primer ends. These misaligned primers can be extended by PolIV. Exhibits no 3'-5' exonuclease (proofreading) activity. May be involved in translesional synthesis, in conjunction with the beta clamp from PolIII. The protein is DNA polymerase IV of Listeria monocytogenes serotype 4a (strain HCC23).